We begin with the raw amino-acid sequence, 206 residues long: Amelogenin, Y isoform (206 aa).

Positions 1-16 are cleaved as a signal peptide; it reads MGTWILFACLVGAAFA. Residues 118-180 form a disordered region; that stretch reads VPGQQSMTPT…PPLPPMFPLR (63 aa). Positions 128–142 are enriched in low complexity; the sequence is QHHQPNLPLPAQQPF. Over residues 143 to 180 the composition is skewed to pro residues; it reads QPQPVQPQPHQPMQPQPPVQPMQPLLPQPPLPPMFPLR.

Belongs to the amelogenin family.

The protein resides in the secreted. Its subcellular location is the extracellular space. It is found in the extracellular matrix. Plays a role in biomineralization. Seems to regulate the formation of crystallites during the secretory stage of tooth enamel development. Thought to play a major role in the structural organization and mineralization of developing enamel. In Homo sapiens (Human), this protein is Amelogenin, Y isoform (AMELY).